A 359-amino-acid polypeptide reads, in one-letter code: UPF0283 membrane protein Rleg2_1967 (359 aa).

The disordered stretch occupies residues 1 to 43 (MSKPPSDPPRRPPAAFTYEDEATERHDNGRQAERRRKPESFSE). Over residues 23–40 (TERHDNGRQAERRRKPES) the composition is skewed to basic and acidic residues. Transmembrane regions (helical) follow at residues 77–97 (FGKI…GLWT) and 111–131 (LGYL…ALVI).

It belongs to the UPF0283 family.

It localises to the cell inner membrane. The sequence is that of UPF0283 membrane protein Rleg2_1967 from Rhizobium leguminosarum bv. trifolii (strain WSM2304).